Here is a 1340-residue protein sequence, read N- to C-terminus: Serine/threonine-protein phosphatase 7 long form homolog (1340 aa).

The Mn(2+) site is built by aspartate 660 and histidine 662. The active-site Proton donor is histidine 722. Residue histidine 773 participates in Mn(2+) binding. Disordered regions lie at residues 788–814 (QERN…DRSE), 1012–1093 (KSMD…SRTR), 1196–1218 (TDGA…SEDI), and 1266–1340 (FTNL…DMDS). Over residues 790 to 799 (RNRKRKRTQK) the composition is skewed to basic residues. Over residues 1018 to 1027 (EQMEVDEKDD) the composition is skewed to acidic residues. Residues 1049 to 1080 (GDRDMVDFSDKTENGSKEADHSETAEISKDLS) are compositionally biased toward basic and acidic residues. The segment covering 1203-1213 (EPSTSKLNYSE) has biased composition (polar residues). 2 stretches are compositionally biased toward basic and acidic residues: residues 1266 to 1289 (FTNL…ERVI) and 1318 to 1328 (DSVDSKNKGSL).

Belongs to the PPP phosphatase family. PP-7 subfamily. The cofactor is Mn(2+). As to expression, expressed in root tips, the shoot apical meristem (SAM), leaf vasculature, hydathodes and mature flowers.

Its subcellular location is the nucleus. The catalysed reaction is O-phospho-L-seryl-[protein] + H2O = L-seryl-[protein] + phosphate. It catalyses the reaction O-phospho-L-threonyl-[protein] + H2O = L-threonyl-[protein] + phosphate. Maybe required to maintain cell division activity in meristematic cells. This chain is Serine/threonine-protein phosphatase 7 long form homolog, found in Arabidopsis thaliana (Mouse-ear cress).